The primary structure comprises 242 residues: Segregation and condensation protein A (242 aa).

Belongs to the ScpA family. Component of a cohesin-like complex composed of ScpA, ScpB and the Smc homodimer, in which ScpA and ScpB bind to the head domain of Smc. The presence of the three proteins is required for the association of the complex with DNA.

It is found in the cytoplasm. Its function is as follows. Participates in chromosomal partition during cell division. May act via the formation of a condensin-like complex containing Smc and ScpB that pull DNA away from mid-cell into both cell halves. This is Segregation and condensation protein A from Streptococcus pneumoniae serotype 4 (strain ATCC BAA-334 / TIGR4).